The following is an 87-amino-acid chain: TKSRYRNRRSRPRRRYGRRMRKTRCRRKGRRISRRPRHTTYRRRVRKIVHLKRRSRPRDEIDNLKVKNNRRLNESLKQHRLPMRVPV.

Residues 1–36 form a disordered region; sequence TKSRYRNRRSRPRRRYGRRMRKTRCRRKGRRISRRP.

The protein resides in the nucleus. It localises to the chromosome. In terms of biological role, involved in nuclear basic protein transition: histones are replaced by spermatid specific proteins which are themselves replaced by protamines in late spermatids. This is Spermatid-specific protein S1 from Scyliorhinus canicula (Small-spotted catshark).